The following is a 566-amino-acid chain: Proline--tRNA ligase 1 (566 aa).

This sequence belongs to the class-II aminoacyl-tRNA synthetase family. ProS type 1 subfamily. Homodimer.

The protein localises to the cytoplasm. The catalysed reaction is tRNA(Pro) + L-proline + ATP = L-prolyl-tRNA(Pro) + AMP + diphosphate. Its function is as follows. Catalyzes the attachment of proline to tRNA(Pro) in a two-step reaction: proline is first activated by ATP to form Pro-AMP and then transferred to the acceptor end of tRNA(Pro). As ProRS can inadvertently accommodate and process non-cognate amino acids such as alanine and cysteine, to avoid such errors it has two additional distinct editing activities against alanine. One activity is designated as 'pretransfer' editing and involves the tRNA(Pro)-independent hydrolysis of activated Ala-AMP. The other activity is designated 'posttransfer' editing and involves deacylation of mischarged Ala-tRNA(Pro). The misacylated Cys-tRNA(Pro) is not edited by ProRS. The protein is Proline--tRNA ligase 1 of Bacillus cereus (strain ATCC 14579 / DSM 31 / CCUG 7414 / JCM 2152 / NBRC 15305 / NCIMB 9373 / NCTC 2599 / NRRL B-3711).